We begin with the raw amino-acid sequence, 68 residues long: Sec-independent protein translocase protein TatA (68 aa).

Residues 1-21 traverse the membrane as a helical segment; it reads MGSLSIWHWLIVLLIVVLVFG. A disordered region spans residues 42–68; sequence GMNEGAKDGQPPAKDAGRIIDGEADKK. Residues 56 to 68 are compositionally biased toward basic and acidic residues; it reads DAGRIIDGEADKK.

The protein belongs to the TatA/E family. In terms of assembly, the Tat system comprises two distinct complexes: a TatABC complex, containing multiple copies of TatA, TatB and TatC subunits, and a separate TatA complex, containing only TatA subunits. Substrates initially bind to the TatABC complex, which probably triggers association of the separate TatA complex to form the active translocon.

It is found in the cell inner membrane. Functionally, part of the twin-arginine translocation (Tat) system that transports large folded proteins containing a characteristic twin-arginine motif in their signal peptide across membranes. TatA could form the protein-conducting channel of the Tat system. This chain is Sec-independent protein translocase protein TatA, found in Chromobacterium violaceum (strain ATCC 12472 / DSM 30191 / JCM 1249 / CCUG 213 / NBRC 12614 / NCIMB 9131 / NCTC 9757 / MK).